A 573-amino-acid chain; its full sequence is Probable CoA ligase CCL13 (573 aa).

ATP-binding positions include 216–224 (TSGTTARPK), 352–357 (HIYGLT), aspartate 449, 461–464 (LKDR), and lysine 556. Residues 284–352 (SPKAIFDNIH…MEEMGFQVNH (69 aa)) are SBD1. Residues 353 to 429 (IYGLTETHGP…FRGNTVMSGY (77 aa)) are SBD2.

Belongs to the ATP-dependent AMP-binding enzyme family.

It is found in the cytoplasm. It localises to the cytosol. The protein is Probable CoA ligase CCL13 of Humulus lupulus (European hop).